The chain runs to 411 residues: Tyrosine--tRNA ligase (411 aa).

Residue Y34 coordinates L-tyrosine. The 'HIGH' region signature appears at 39–48; that stretch reads CTATSLHIGS. Positions 171 and 175 each coordinate L-tyrosine. Residues 231–235 carry the 'KMSKS' region motif; the sequence is KMGKT. K234 is a binding site for ATP. The region spanning 345 to 411 is the S4 RNA-binding domain; sequence ISAYELFHEA…GKKRHILVRV (67 aa).

The protein belongs to the class-I aminoacyl-tRNA synthetase family. TyrS type 1 subfamily. As to quaternary structure, homodimer.

It localises to the cytoplasm. The catalysed reaction is tRNA(Tyr) + L-tyrosine + ATP = L-tyrosyl-tRNA(Tyr) + AMP + diphosphate + H(+). Functionally, catalyzes the attachment of tyrosine to tRNA(Tyr) in a two-step reaction: tyrosine is first activated by ATP to form Tyr-AMP and then transferred to the acceptor end of tRNA(Tyr). In Rickettsia peacockii (strain Rustic), this protein is Tyrosine--tRNA ligase.